The following is a 375-amino-acid chain: Aminomethyltransferase (375 aa).

It belongs to the GcvT family. The glycine cleavage system is composed of four proteins: P, T, L and H.

The enzyme catalyses N(6)-[(R)-S(8)-aminomethyldihydrolipoyl]-L-lysyl-[protein] + (6S)-5,6,7,8-tetrahydrofolate = N(6)-[(R)-dihydrolipoyl]-L-lysyl-[protein] + (6R)-5,10-methylene-5,6,7,8-tetrahydrofolate + NH4(+). Functionally, the glycine cleavage system catalyzes the degradation of glycine. The sequence is that of Aminomethyltransferase from Cupriavidus pinatubonensis (strain JMP 134 / LMG 1197) (Cupriavidus necator (strain JMP 134)).